A 120-amino-acid chain; its full sequence is NAD(P)H-quinone oxidoreductase subunit 3, chloroplastic (120 aa).

The next 3 membrane-spanning stretches (helical) occupy residues 9-29 (IFWA…LISG), 64-84 (MFAL…PWAM), and 88-108 (VLGV…IVGS).

It belongs to the complex I subunit 3 family. As to quaternary structure, NDH is composed of at least 16 different subunits, 5 of which are encoded in the nucleus.

The protein resides in the plastid. It localises to the chloroplast thylakoid membrane. The enzyme catalyses a plastoquinone + NADH + (n+1) H(+)(in) = a plastoquinol + NAD(+) + n H(+)(out). The catalysed reaction is a plastoquinone + NADPH + (n+1) H(+)(in) = a plastoquinol + NADP(+) + n H(+)(out). NDH shuttles electrons from NAD(P)H:plastoquinone, via FMN and iron-sulfur (Fe-S) centers, to quinones in the photosynthetic chain and possibly in a chloroplast respiratory chain. The immediate electron acceptor for the enzyme in this species is believed to be plastoquinone. Couples the redox reaction to proton translocation, and thus conserves the redox energy in a proton gradient. The chain is NAD(P)H-quinone oxidoreductase subunit 3, chloroplastic from Amborella trichopoda.